The chain runs to 671 residues: Phosphoenolpyruvate carboxykinase (ATP) 1 (671 aa).

Positions 1-10 (MSAGNGNATN) are enriched in low complexity. A disordered region spans residues 1 to 44 (MSAGNGNATNGDGGFSFPKGPVMPKITTGAAKRGSGVCHDDSGP). Serine 2 carries the post-translational modification N-acetylserine. A Phosphoserine modification is found at serine 62. Threonine 66 carries the post-translational modification Phosphothreonine. Residues 100 to 127 (TRESGPKVVRGDPAEKKTDGSTTPAYAH) are disordered. Basic and acidic residues predominate over residues 108–118 (VRGDPAEKKTD). Arginine 189 is a binding site for substrate. Positions 270 and 271 each coordinate Ca(2+). Substrate is bound by residues tyrosine 328 and lysine 334. ATP-binding positions include lysine 334, histidine 353, and 369 to 377 (GLSGTGKTT). Mn(2+)-binding residues include lysine 334 and histidine 353. Position 390 (aspartate 390) interacts with Mn(2+). Glycine 404 contacts Ca(2+). ATP contacts are provided by residues glutamate 418, arginine 455, 574 to 575 (RI), isoleucine 575, and threonine 580. Residue arginine 455 participates in substrate binding.

It belongs to the phosphoenolpyruvate carboxykinase (ATP) family. In terms of assembly, monomer. Requires Mn(2+) as cofactor. As to expression, expressed in cotyledons, flowers, siliques, seeds, leaves, stems and roots. Localized in mid-veins.

The protein resides in the cytoplasm. It carries out the reaction oxaloacetate + ATP = phosphoenolpyruvate + ADP + CO2. The protein operates within carbohydrate biosynthesis; gluconeogenesis. With respect to regulation, allosterically activated by calcium. It may represent the only case of a monomeric, allosteric enzyme. In terms of biological role, involved in the gluconeogenesis. Catalyzes the conversion of oxaloacetate (OAA) to phosphoenolpyruvate (PEP) through direct phosphoryl transfer between the nucleoside triphosphate and OAA. This Arabidopsis thaliana (Mouse-ear cress) protein is Phosphoenolpyruvate carboxykinase (ATP) 1.